Reading from the N-terminus, the 100-residue chain is Osteocalcin (100 aa).

An N-terminal signal peptide occupies residues 1-23 (MRALTLLALLALAALCIAGQAGA). Residues 24–51 (KPSGAESSKGAAFVSKQEGSEVVKRPRR) constitute a propeptide that is removed on maturation. Residues 52-98 (YLYQWLGAPVPYPDPLEPRREVCELNPDCDELADHIGFQEAYRRFYG) form the Gla domain. 4 residues coordinate Ca(2+): glutamate 68, glutamate 72, glutamate 75, and aspartate 81. At glutamate 68 the chain carries 4-carboxyglutamate; partial. Glutamate 72 and glutamate 75 each carry 4-carboxyglutamate. A disulfide bridge links cysteine 74 with cysteine 80.

It belongs to the osteocalcin/matrix Gla protein family. In terms of processing, gamma-carboxyglutamate residues are formed by vitamin K dependent carboxylation by GGCX. These residues are essential for the binding of calcium. Decarboxylation promotes the hormone activity.

It is found in the secreted. Bone protein that constitutes 1-2% of the total bone protein, and which acts as a negative regulator of bone formation. Functions to limit bone formation without impairing bone resorption or mineralization. It binds strongly to apatite and calcium. Functionally, the uncarboxylated form acts as a hormone secreted by osteoblasts, which regulates different cellular processes, such as energy metabolism, male fertility and brain development. Regulates of energy metabolism by acting as a hormone favoring pancreatic beta-cell proliferation, insulin secretion and sensitivity and energy expenditure. Uncarboxylated osteocalcin hormone also promotes testosterone production in the testes: acts as a ligand for G protein-coupled receptor GPRC6A at the surface of Leydig cells, initiating a signaling response that promotes the expression of enzymes required for testosterone synthesis in a CREB-dependent manner. Also acts as a regulator of brain development: osteocalcin hormone crosses the blood-brain barrier and acts as a ligand for GPR158 on neurons, initiating a signaling response that prevents neuronal apoptosis in the hippocampus, favors the synthesis of all monoamine neurotransmitters and inhibits that of gamma-aminobutyric acid (GABA). Osteocalcin also crosses the placenta during pregnancy and maternal osteocalcin is required for fetal brain development. The sequence is that of Osteocalcin (BGLAP) from Homo sapiens (Human).